A 239-amino-acid polypeptide reads, in one-letter code: Transcriptional regulatory protein BtsR (239 aa).

The Response regulatory domain maps to 3 to 116 (KVLIVDDEPL…RLEKTLARLR (114 aa)). Asp54 bears the 4-aspartylphosphate mark. The region spanning 137 to 239 (IPCTGHSRIY…LKSLKEAIGL (103 aa)) is the HTH LytTR-type domain.

Phosphorylated by BtsS.

Functionally, member of the two-component regulatory system BtsS/BtsR. BtsR regulates expression of btsT by binding to its promoter region. This chain is Transcriptional regulatory protein BtsR, found in Shigella flexneri.